A 289-amino-acid polypeptide reads, in one-letter code: Tachykinins (289 aa).

Residues 1–24 (MRPLSGLIALALLLLLLLTAPSSA) form the signal peptide. The interval 24–94 (AADTETESSG…DEEADSSYAE (71 aa)) is disordered. A propeptide spanning residues 25-47 (ADTETESSGSPLTPGAEEPRRVV) is cleaved from the precursor. Arg-59 is subject to Arginine amide. Basic and acidic residues predominate over residues 60–69 (GKKDEEHDTS). Asn-95 carries the post-translational modification Asparagine amide. At Arg-110 the chain carries Arginine amide. Val-153 carries the valine amide modification. Arginine amide occurs at positions 165, 200, 239, and 281. The propeptide occupies 285 to 289 (PALFE).

Belongs to the tachykinin family. In terms of tissue distribution, strong expression is seen in a group of 14 cells plus one isolated cell in the midgut of stage 17 embryos. Also expressed in a pair of medially located unidentified cells, just posterior to the brain, and in two lateral groups of cells that may be associated with tracheae. Expression in the larval gut is restricted to cells with endocrine cell-like morphology in the posterior midgut, just anterior to the malphigian tubules. In the brain, expression is detected in a restricted number of neuronal cell bodies. Expression in the adult female gut is restricted to the midgut with no expression detected in the hindgut.

It is found in the secreted. In terms of biological role, tachykinins are active peptides which excite neurons, evoke behavioral responses, are potent vasodilators and secretagogues, and contract (directly or indirectly) many smooth muscles. Stimulates gut muscle contractions. Required for the response to the male sex pheromone CH503 which is transferred from males to females during mating and inhibits courtship behavior by other males. The Gr68a gustatory receptor is required for detection of the pheromone and Gr68a-expressing neurons in the male foreleg relay signals to the suboesophageal zone (SEZ) which leads to courtship suppression through release of tachykinin from a cluster of 8-10 neurons in the SEZ. The polypeptide is Tachykinins (Drosophila melanogaster (Fruit fly)).